The primary structure comprises 258 residues: Probable enoyl-CoA hydratase (258 aa).

The protein belongs to the enoyl-CoA hydratase/isomerase family.

The enzyme catalyses a (3S)-3-hydroxyacyl-CoA = a (2E)-enoyl-CoA + H2O. It carries out the reaction a 4-saturated-(3S)-3-hydroxyacyl-CoA = a (3E)-enoyl-CoA + H2O. The protein operates within lipid metabolism; fatty acid beta-oxidation. In terms of biological role, involved in the degradation of long-chain fatty acids. The sequence is that of Probable enoyl-CoA hydratase (fadB) from Bacillus subtilis (strain 168).